Consider the following 1092-residue polypeptide: Isoleucine--tRNA ligase (1092 aa).

Residues 53-63 carry the 'HIGH' region motif; sequence PFANGLPHYGH. Residues 613–617 carry the 'KMSKS' region motif; it reads KLSKR. Lys616 serves as a coordination point for ATP.

Belongs to the class-I aminoacyl-tRNA synthetase family. IleS type 2 subfamily. In terms of assembly, monomer. It depends on Zn(2+) as a cofactor.

It localises to the cytoplasm. It carries out the reaction tRNA(Ile) + L-isoleucine + ATP = L-isoleucyl-tRNA(Ile) + AMP + diphosphate. Catalyzes the attachment of isoleucine to tRNA(Ile). As IleRS can inadvertently accommodate and process structurally similar amino acids such as valine, to avoid such errors it has two additional distinct tRNA(Ile)-dependent editing activities. One activity is designated as 'pretransfer' editing and involves the hydrolysis of activated Val-AMP. The other activity is designated 'posttransfer' editing and involves deacylation of mischarged Val-tRNA(Ile). This chain is Isoleucine--tRNA ligase, found in Rickettsia conorii (strain ATCC VR-613 / Malish 7).